A 470-amino-acid chain; its full sequence is Histidine--tRNA ligase (470 aa).

This sequence belongs to the class-II aminoacyl-tRNA synthetase family. In terms of assembly, homodimer.

It is found in the cytoplasm. The enzyme catalyses tRNA(His) + L-histidine + ATP = L-histidyl-tRNA(His) + AMP + diphosphate + H(+). In Xanthomonas oryzae pv. oryzae (strain PXO99A), this protein is Histidine--tRNA ligase.